Consider the following 166-residue polypeptide: NAD(P)H-quinone oxidoreductase subunit I, chloroplastic (166 aa).

2 4Fe-4S ferredoxin-type domains span residues 55-84 and 95-124; these read GRIHFEFDKCIACEVCVRVCPIDLPVVDWK and LNYSIDFGICIFCGNCVEYCPTNCLSMTEE. Positions 64, 67, 70, 74, 104, 107, 110, and 114 each coordinate [4Fe-4S] cluster.

The protein belongs to the complex I 23 kDa subunit family. As to quaternary structure, NDH is composed of at least 16 different subunits, 5 of which are encoded in the nucleus. [4Fe-4S] cluster is required as a cofactor.

It localises to the plastid. Its subcellular location is the chloroplast thylakoid membrane. It carries out the reaction a plastoquinone + NADH + (n+1) H(+)(in) = a plastoquinol + NAD(+) + n H(+)(out). The catalysed reaction is a plastoquinone + NADPH + (n+1) H(+)(in) = a plastoquinol + NADP(+) + n H(+)(out). Functionally, NDH shuttles electrons from NAD(P)H:plastoquinone, via FMN and iron-sulfur (Fe-S) centers, to quinones in the photosynthetic chain and possibly in a chloroplast respiratory chain. The immediate electron acceptor for the enzyme in this species is believed to be plastoquinone. Couples the redox reaction to proton translocation, and thus conserves the redox energy in a proton gradient. The polypeptide is NAD(P)H-quinone oxidoreductase subunit I, chloroplastic (Raillardella argentea (Silky raillardella)).